Reading from the N-terminus, the 159-residue chain is 2-C-methyl-D-erythritol 2,4-cyclodiphosphate synthase (159 aa).

D10 and H12 together coordinate a divalent metal cation. 4-CDP-2-C-methyl-D-erythritol 2-phosphate-binding positions include 10 to 12 (DVH) and 36 to 37 (HS). Residue H44 participates in a divalent metal cation binding. 4-CDP-2-C-methyl-D-erythritol 2-phosphate contacts are provided by residues 58-60 (DIG), 63-67 (FSDTD), and R144.

The protein belongs to the IspF family. As to quaternary structure, homotrimer. A divalent metal cation serves as cofactor.

It catalyses the reaction 4-CDP-2-C-methyl-D-erythritol 2-phosphate = 2-C-methyl-D-erythritol 2,4-cyclic diphosphate + CMP. Its pathway is isoprenoid biosynthesis; isopentenyl diphosphate biosynthesis via DXP pathway; isopentenyl diphosphate from 1-deoxy-D-xylulose 5-phosphate: step 4/6. Functionally, involved in the biosynthesis of isopentenyl diphosphate (IPP) and dimethylallyl diphosphate (DMAPP), two major building blocks of isoprenoid compounds. Catalyzes the conversion of 4-diphosphocytidyl-2-C-methyl-D-erythritol 2-phosphate (CDP-ME2P) to 2-C-methyl-D-erythritol 2,4-cyclodiphosphate (ME-CPP) with a corresponding release of cytidine 5-monophosphate (CMP). The sequence is that of 2-C-methyl-D-erythritol 2,4-cyclodiphosphate synthase from Paraburkholderia phytofirmans (strain DSM 17436 / LMG 22146 / PsJN) (Burkholderia phytofirmans).